A 154-amino-acid polypeptide reads, in one-letter code: Protein AE7-like 1 (154 aa).

Belongs to the MIP18 family.

Its function is as follows. May play a role in chromosome segregation through establishment of sister chromatid cohesion. Unable to complement ae7 mutants, and thus probably not involved in the cytosolic iron-sulfur assembly (CIA) pathway. The protein is Protein AE7-like 1 of Arabidopsis thaliana (Mouse-ear cress).